Reading from the N-terminus, the 303-residue chain is UDP-N-acetylenolpyruvoylglucosamine reductase (303 aa).

Residues 28-195 form the FAD-binding PCMH-type domain; sequence KTGGPAQYLA…ISATFGLEPG (168 aa). The active site involves R174. Residue S224 is the Proton donor of the active site. E294 is a catalytic residue.

It belongs to the MurB family. FAD is required as a cofactor.

It is found in the cytoplasm. It catalyses the reaction UDP-N-acetyl-alpha-D-muramate + NADP(+) = UDP-N-acetyl-3-O-(1-carboxyvinyl)-alpha-D-glucosamine + NADPH + H(+). It participates in cell wall biogenesis; peptidoglycan biosynthesis. Cell wall formation. This Lactobacillus gasseri (strain ATCC 33323 / DSM 20243 / BCRC 14619 / CIP 102991 / JCM 1131 / KCTC 3163 / NCIMB 11718 / NCTC 13722 / AM63) protein is UDP-N-acetylenolpyruvoylglucosamine reductase.